We begin with the raw amino-acid sequence, 305 residues long: NADH-cytochrome b5 reductase 1 (305 aa).

The chain crosses the membrane as a helical span at residues 8–28 (VLLASLGVGLFTLFGLALGTY). Residues 44-156 (DEKYLLRLLD…RGPSGLLSYA (113 aa)) enclose the FAD-binding FR-type domain. FAD contacts are provided by residues 136–166 (DSLKIGDVVEFRGPSGLLSYAGKGNFNIQPN) and 175–210 (VAKKLGMIAGGTGITPMLQLIRAILKVPEDPTQCFL).

It belongs to the flavoprotein pyridine nucleotide cytochrome reductase family. It depends on FAD as a cofactor.

The protein localises to the membrane. The catalysed reaction is 2 Fe(III)-[cytochrome b5] + NADH = 2 Fe(II)-[cytochrome b5] + NAD(+) + H(+). NADH-cytochrome b5 reductases are involved in desaturation and elongation of fatty acids, cholesterol biosynthesis, drug metabolism, and, in erythrocyte, methemoglobin reduction. The protein is NADH-cytochrome b5 reductase 1 (Cyb5r1) of Rattus norvegicus (Rat).